The primary structure comprises 437 residues: Trigger factor (437 aa).

The region spanning 163–248 is the PPIase FKBP-type domain; the sequence is GDRVIIDFEG…LNNVSEPTLP (86 aa).

It belongs to the FKBP-type PPIase family. Tig subfamily.

It is found in the cytoplasm. The enzyme catalyses [protein]-peptidylproline (omega=180) = [protein]-peptidylproline (omega=0). In terms of biological role, involved in protein export. Acts as a chaperone by maintaining the newly synthesized protein in an open conformation. Functions as a peptidyl-prolyl cis-trans isomerase. The polypeptide is Trigger factor (Neisseria gonorrhoeae (strain NCCP11945)).